The sequence spans 871 residues: uncharacterized protein (871 aa).

Helical transmembrane passes span 11–31 (AFVS…GLFL), 92–112 (YLFT…PILL), 139–159 (FYAH…IIYR), 380–400 (TILT…GCIS), 422–442 (LLGI…MSLV), 475–495 (VQVF…VQVI), 520–540 (FLLQ…TLLL), 562–582 (LSAP…TIMI), 586–606 (IIAP…YFAY), 629–649 (LFQV…LFVL), and 653–673 (WGAT…HLYF). A phosphoserine mark is found at serine 725, serine 726, serine 727, serine 729, serine 737, and serine 761. The segment covering 727 to 740 (SGSDEFLETSSRTS) has biased composition (polar residues). Residues 727–746 (SGSDEFLETSSRTSENTKEK) form a disordered region.

The protein belongs to the CSC1 (TC 1.A.17) family.

It localises to the golgi apparatus membrane. Its function is as follows. Acts as an osmosensitive calcium-permeable cation channel. This is an uncharacterized protein from Schizosaccharomyces pombe (strain 972 / ATCC 24843) (Fission yeast).